Consider the following 142-residue polypeptide: Galactose-6-phosphate isomerase subunit LacA (142 aa).

The protein belongs to the LacAB/RpiB family. As to quaternary structure, heteromultimeric protein consisting of LacA and LacB.

It catalyses the reaction aldehydo-D-galactose 6-phosphate = keto-D-tagatose 6-phosphate. The protein operates within carbohydrate metabolism; D-galactose 6-phosphate degradation; D-tagatose 6-phosphate from D-galactose 6-phosphate: step 1/1. The polypeptide is Galactose-6-phosphate isomerase subunit LacA (Staphylococcus haemolyticus (strain JCSC1435)).